The chain runs to 199 residues: ATP-dependent Clp protease proteolytic subunit (199 aa).

Serine 99 acts as the Nucleophile in catalysis. The active site involves histidine 124.

This sequence belongs to the peptidase S14 family. As to quaternary structure, fourteen ClpP subunits assemble into 2 heptameric rings which stack back to back to give a disk-like structure with a central cavity, resembling the structure of eukaryotic proteasomes.

The protein resides in the cytoplasm. It carries out the reaction Hydrolysis of proteins to small peptides in the presence of ATP and magnesium. alpha-casein is the usual test substrate. In the absence of ATP, only oligopeptides shorter than five residues are hydrolyzed (such as succinyl-Leu-Tyr-|-NHMec, and Leu-Tyr-Leu-|-Tyr-Trp, in which cleavage of the -Tyr-|-Leu- and -Tyr-|-Trp bonds also occurs).. In terms of biological role, cleaves peptides in various proteins in a process that requires ATP hydrolysis. Has a chymotrypsin-like activity. Plays a major role in the degradation of misfolded proteins. This Moorella thermoacetica (strain ATCC 39073 / JCM 9320) protein is ATP-dependent Clp protease proteolytic subunit.